Consider the following 1441-residue polypeptide: Remodeling and spacing factor 1 (1441 aa).

One can recognise a DDT domain in the interval 17–84 (PGSCPNFAVV…MRKIGKSVTA (68 aa)). Residues Lys136 and Lys215 each participate in a glycyl lysine isopeptide (Lys-Gly) (interchain with G-Cter in SUMO2) cross-link. Residues 215–227 (KNSSQQDNSSRES) show a composition bias toward polar residues. The segment at 215 to 283 (KNSSQQDNSS…TTVKKEKEDE (69 aa)) is disordered. Ser227 carries the phosphoserine modification. 2 stretches are compositionally biased toward basic and acidic residues: residues 234–257 (ETKK…KSEE) and 274–283 (TTVKKEKEDE). Residues Lys236, Lys243, Lys248, Lys252, and Lys254 each participate in a glycyl lysine isopeptide (Lys-Gly) (interchain with G-Cter in SUMO2) cross-link. A Glycyl lysine isopeptide (Lys-Gly) (interchain with G-Cter in SUMO1); alternate cross-link involves residue Lys277. A Glycyl lysine isopeptide (Lys-Gly) (interchain with G-Cter in SUMO2); alternate cross-link involves residue Lys277. Glycyl lysine isopeptide (Lys-Gly) (interchain with G-Cter in SUMO2) cross-links involve residues Lys284, Lys288, Lys294, Lys305, Lys306, Lys309, Lys323, Lys327, Lys337, Lys342, Lys358, Lys373, Lys381, and Lys390. The span at 330–340 (RADPKDTKSSM) shows a compositional bias: basic and acidic residues. The tract at residues 330 to 385 (RADPKDTKSSMEKPVAQEPERIEFGGNIKSSHEITEKSTEETEKLKNDQQAKIPLK) is disordered. The span at 359–378 (SSHEITEKSTEETEKLKNDQ) shows a compositional bias: basic and acidic residues. A phosphoserine mark is found at Ser392 and Ser397. Residues Lys400, Lys405, Lys415, and Lys419 each participate in a glycyl lysine isopeptide (Lys-Gly) (interchain with G-Cter in SUMO2) cross-link. Ser429 is subject to Phosphoserine. Residue Lys439 forms a Glycyl lysine isopeptide (Lys-Gly) (interchain with G-Cter in SUMO2) linkage. Lys456 is covalently cross-linked (Glycyl lysine isopeptide (Lys-Gly) (interchain with G-Cter in SUMO1); alternate). Lys456 participates in a covalent cross-link: Glycyl lysine isopeptide (Lys-Gly) (interchain with G-Cter in SUMO2); alternate. Glycyl lysine isopeptide (Lys-Gly) (interchain with G-Cter in SUMO2) cross-links involve residues Lys463 and Lys468. Basic and acidic residues predominate over residues 467-480 (TKEESYSPSKDRNI). The disordered stretch occupies residues 467-634 (TKEESYSPSK…AAETSPPSNI (168 aa)). Ser473 bears the Phosphoserine mark. A compositionally biased stretch (polar residues) spans 482-498 (TEGNGTESLNSVITSMK). Lys498 participates in a covalent cross-link: Glycyl lysine isopeptide (Lys-Gly) (interchain with G-Cter in SUMO2). Basic and acidic residues predominate over residues 500 to 514 (GELEKETAPLRKDAD). The residue at position 524 (Ser524) is a Phosphoserine. Residues 552–562 (SKTALSSTESC) are compositionally biased toward polar residues. Lys565 participates in a covalent cross-link: Glycyl lysine isopeptide (Lys-Gly) (interchain with G-Cter in SUMO2). A compositionally biased stretch (basic and acidic residues) spans 565–601 (KGEEKSPKTKKDKRPPILECLEKLEKSKKTFLDKDAQ). Residues Ser570 and Ser604 each carry the phosphoserine modification. A compositionally biased stretch (basic and acidic residues) spans 609-621 (EVPKSTLESEKPG). Ser622 bears the Phosphoserine mark. Thr628 carries the post-translational modification Phosphothreonine. Ser629 bears the Phosphoserine mark. Residues Lys662, Lys663, Lys670, Lys677, Lys698, and Lys709 each participate in a glycyl lysine isopeptide (Lys-Gly) (interchain with G-Cter in SUMO2) cross-link. The disordered stretch occupies residues 675–887 (FTKVEMDNLD…EEKESEEAIL (213 aa)). Ser748 carries the phosphoserine modification. Composition is skewed to basic and acidic residues over residues 753-770 (LEPE…EKTN), 789-802 (AEIR…KRGE), and 816-831 (KTDK…KDTN). Glycyl lysine isopeptide (Lys-Gly) (interchain with G-Cter in SUMO2) cross-links involve residues Lys758, Lys768, Lys795, and Lys799. The segment covering 864–873 (GSGSEKSSAA) has biased composition (low complexity). The segment covering 874–887 (SEEEEEKESEEAIL) has biased composition (acidic residues). Residue Ser882 is modified to Phosphoserine. A PHD-type zinc finger spans residues 891 to 941 (DEPCKKCGLPNHPELILLCDSCDSGYHTACLRPPLMIIPDGEWFCPPCQHK). Residues 942–1012 (LLCEKLEEQL…SKANLLERRS (71 aa)) are a coiled coil. The tract at residues 983–1007 (PPQEPDFSEDQEEKKKDSKKSKANL) is disordered. Lys1039 participates in a covalent cross-link: Glycyl lysine isopeptide (Lys-Gly) (interchain with G-Cter in SUMO2). Position 1050 is an N6-acetyllysine (Lys1050). The disordered stretch occupies residues 1063 to 1428 (ISTILDEERK…EEEEDELLRV (366 aa)). Acidic residues-rich tracts occupy residues 1094–1107 (LDSD…ESED) and 1120–1141 (VVSD…DSDT). Phosphoserine is present on residues Ser1096, Ser1098, and Ser1105. Over residues 1146–1169 (RRLRRHPSRPMRQSRRLRRKTPKK) the composition is skewed to basic residues. Residues 1189-1199 (SDFSDDFSDDF) show a composition bias toward acidic residues. A compositionally biased stretch (basic residues) spans 1203–1212 (RRRRSRRNQK). Residues Ser1221, Ser1223, and Ser1226 each carry the phosphoserine modification. The segment covering 1229–1244 (SLRRGKEIRRVHKRRL) has biased composition (basic residues). Ser1258 and Ser1277 each carry phosphoserine. A Phosphothreonine modification is found at Thr1278. The segment covering 1280 to 1292 (EYSEADEEEEEEE) has biased composition (acidic residues). Residue Thr1305 is modified to Phosphothreonine. Phosphoserine occurs at positions 1325 and 1336. Basic and acidic residues predominate over residues 1335–1344 (ESTKKPYRIE). Lys1339 carries the post-translational modification N6-acetyllysine. Phosphoserine is present on residues Ser1345, Ser1359, and Ser1375. Residues 1394-1408 (PKDNSTASASLASNG) are compositionally biased toward polar residues.

In terms of assembly, component of the RSF-1 ISWI chromatin-remodeling complex at least composed of SMARCA1 and RSF1. Within the RSF-1 ISWI chromatin-remodeling complex interacts with SMARCA1. Component of the RSF-5 ISWI chromatin-remodeling complex (also called the RSF complex) at least composed of SMARCA5/SNF2H and RSF1. Within the RSF-5 ISWI chromatin-remodeling complex interacts with SMARCA5/SNF2H; the interaction is direct. Identified in a centromere complex containing histones H2A, H2B and H4, and at least CENPA, CENPB, CENPC, CENPT, CENPN, HJURP, SUPT16H, SSRP1 and RSF1. Also binds the HBV pX/HBx protein, which is required to activate transcription of the viral genome. Phosphorylated. In terms of tissue distribution, ubiquitously expressed. Highly expressed in the heart, skeletal muscle, kidney and placenta. Expressed at low levels in the brain and colon.

Its subcellular location is the nucleus. Regulatory subunit of the ATP-dependent RSF-1 and RSF-5 ISWI chromatin-remodeling complexes, which form ordered nucleosome arrays on chromatin and facilitate access to DNA during DNA-templated processes such as DNA replication, transcription, and repair. Binds to core histones together with SMARCA5, and is required for the assembly of regular nucleosome arrays by the RSF-5 ISWI chromatin-remodeling complex. Directly stimulates the ATPase activity of SMARCA1 and SMARCA5 in the RSF-1 and RSF-5 ISWI chromatin-remodeling complexes, respectively. The RSF-1 ISWI chromatin remodeling complex has a lower ATP hydrolysis rate than the RSF-5 ISWI chromatin-remodeling complex. The complexes do not have the ability to slide mononucleosomes to the center of a DNA template. Facilitates transcription of hepatitis B virus (HBV) genes by the pX transcription activator. In case of infection by HBV, together with pX, it represses TNF-alpha induced NF-kappa-B transcription activation. Represses transcription when artificially recruited to chromatin by fusion to a heterogeneous DNA binding domain. This is Remodeling and spacing factor 1 (RSF1) from Homo sapiens (Human).